A 153-amino-acid chain; its full sequence is 6,7-dimethyl-8-ribityllumazine synthase (153 aa).

Residues Phe22, 56–58 (AFE), and 80–82 (AVI) contribute to the 5-amino-6-(D-ribitylamino)uracil site. (2S)-2-hydroxy-3-oxobutyl phosphate is bound at residue 85–86 (AT). His88 functions as the Proton donor in the catalytic mechanism. Residue Phe113 coordinates 5-amino-6-(D-ribitylamino)uracil. Arg127 contacts (2S)-2-hydroxy-3-oxobutyl phosphate.

The protein belongs to the DMRL synthase family.

It catalyses the reaction (2S)-2-hydroxy-3-oxobutyl phosphate + 5-amino-6-(D-ribitylamino)uracil = 6,7-dimethyl-8-(1-D-ribityl)lumazine + phosphate + 2 H2O + H(+). It participates in cofactor biosynthesis; riboflavin biosynthesis; riboflavin from 2-hydroxy-3-oxobutyl phosphate and 5-amino-6-(D-ribitylamino)uracil: step 1/2. Its function is as follows. Catalyzes the formation of 6,7-dimethyl-8-ribityllumazine by condensation of 5-amino-6-(D-ribitylamino)uracil with 3,4-dihydroxy-2-butanone 4-phosphate. This is the penultimate step in the biosynthesis of riboflavin. This Clostridium tetani (strain Massachusetts / E88) protein is 6,7-dimethyl-8-ribityllumazine synthase.